The primary structure comprises 143 residues: Small ribosomal subunit protein eS12 (143 aa).

This sequence belongs to the eukaryotic ribosomal protein eS12 family.

The protein is Small ribosomal subunit protein eS12 (RPS12) of Hordeum vulgare (Barley).